Here is a 426-residue protein sequence, read N- to C-terminus: Enolase (426 aa).

(2R)-2-phosphoglycerate is bound at residue Q162. The active-site Proton donor is E204. The Mg(2+) site is built by D241, E284, and D311. (2R)-2-phosphoglycerate contacts are provided by K336, R365, S366, and K387. Catalysis depends on K336, which acts as the Proton acceptor.

Belongs to the enolase family. In terms of assembly, component of the RNA degradosome, a multiprotein complex involved in RNA processing and mRNA degradation. Requires Mg(2+) as cofactor.

It is found in the cytoplasm. The protein localises to the secreted. It localises to the cell surface. It catalyses the reaction (2R)-2-phosphoglycerate = phosphoenolpyruvate + H2O. It functions in the pathway carbohydrate degradation; glycolysis; pyruvate from D-glyceraldehyde 3-phosphate: step 4/5. Its function is as follows. Catalyzes the reversible conversion of 2-phosphoglycerate (2-PG) into phosphoenolpyruvate (PEP). It is essential for the degradation of carbohydrates via glycolysis. This Hydrogenovibrio crunogenus (strain DSM 25203 / XCL-2) (Thiomicrospira crunogena) protein is Enolase.